Here is a 289-residue protein sequence, read N- to C-terminus: UTP--glucose-1-phosphate uridylyltransferase 2 (289 aa).

This sequence belongs to the UDPGP type 2 family.

It carries out the reaction alpha-D-glucose 1-phosphate + UTP + H(+) = UDP-alpha-D-glucose + diphosphate. The protein operates within glycolipid metabolism; diglucosyl-diacylglycerol biosynthesis. In terms of biological role, catalyzes the formation of UDP-glucose from glucose-1-phosphate and UTP. This is an intermediate step in the biosynthesis of diglucosyl-diacylglycerol (Glc2-DAG), i.e. a glycolipid found in the membrane, which is also used as a membrane anchor for lipoteichoic acid (LTA). The polypeptide is UTP--glucose-1-phosphate uridylyltransferase 2 (gtaB2) (Staphylococcus saprophyticus subsp. saprophyticus (strain ATCC 15305 / DSM 20229 / NCIMB 8711 / NCTC 7292 / S-41)).